A 305-amino-acid polypeptide reads, in one-letter code: Probable G-protein coupled receptor 141 (305 aa).

The Extracellular segment spans residues 1 to 22 (MPGHNTSRNSSCDPIVTPHLIS). 2 N-linked (GlcNAc...) asparagine glycosylation sites follow: N5 and N9. The chain crosses the membrane as a helical span at residues 23–43 (LYFIVLIGGLVGVISILFLLV). At 44–50 (KMNTRSV) the chain is on the cytoplasmic side. The chain crosses the membrane as a helical span at residues 51–71 (TTMAVINLVVVHSVFLLTVPF). The Extracellular segment spans residues 72–89 (RLTYLIKKTWMFGLPFCK). The chain crosses the membrane as a helical span at residues 90–110 (FVSAMLHIHMYLTFLFYVVIL). Over 111-131 (VTRYLIFFKCKDKVEFYRKLH) the chain is Cytoplasmic. A helical membrane pass occupies residues 132–152 (AVAASAGMWTLVIVIVVPLVV). The Extracellular portion of the chain corresponds to 153–183 (SRYGIHEEYNEEHCFKFHKELAYTYVKIINY). Residues 184–204 (MIVIFVIAVAVILLVFQVFII) traverse the membrane as a helical segment. Residues 205-227 (MLMVQKLRHSLLSHQEFWAQLKN) are Cytoplasmic-facing. A helical transmembrane segment spans residues 228-248 (LFFIGVILVCFLPYQFFRIYY). Residues 249-267 (LNVVTHSNACNSKVAFYNE) lie on the Extracellular side of the membrane. A helical transmembrane segment spans residues 268–288 (IFLSVTAISCYDLLLFVFGGS). Topologically, residues 289-305 (HWFKQKIIGLWNCVLCR) are cytoplasmic.

This sequence belongs to the G-protein coupled receptor 1 family.

Its subcellular location is the cell membrane. In terms of biological role, orphan receptor. This chain is Probable G-protein coupled receptor 141 (GPR141), found in Homo sapiens (Human).